The sequence spans 120 residues: Large ribosomal subunit protein uL18 (120 aa).

It belongs to the universal ribosomal protein uL18 family. In terms of assembly, part of the 50S ribosomal subunit; part of the 5S rRNA/L5/L18/L25 subcomplex. Contacts the 5S and 23S rRNAs.

This is one of the proteins that bind and probably mediate the attachment of the 5S RNA into the large ribosomal subunit, where it forms part of the central protuberance. This chain is Large ribosomal subunit protein uL18, found in Azorhizobium caulinodans (strain ATCC 43989 / DSM 5975 / JCM 20966 / LMG 6465 / NBRC 14845 / NCIMB 13405 / ORS 571).